A 100-amino-acid chain; its full sequence is NADH-quinone oxidoreductase subunit K 2 (100 aa).

3 helical membrane passes run 2 to 22 (LAIENYLILSAILFSIGTIGV), 29 to 49 (IVIFMCIEMMLNAVNLTFIAF), and 61 to 81 (FVFFVMTVAAAEAAVGLALMI).

It belongs to the complex I subunit 4L family. In terms of assembly, NDH-1 is composed of 14 different subunits. Subunits NuoA, H, J, K, L, M, N constitute the membrane sector of the complex.

The protein localises to the cell inner membrane. It catalyses the reaction a quinone + NADH + 5 H(+)(in) = a quinol + NAD(+) + 4 H(+)(out). Functionally, NDH-1 shuttles electrons from NADH, via FMN and iron-sulfur (Fe-S) centers, to quinones in the respiratory chain. The immediate electron acceptor for the enzyme in this species is believed to be ubiquinone. Couples the redox reaction to proton translocation (for every two electrons transferred, four hydrogen ions are translocated across the cytoplasmic membrane), and thus conserves the redox energy in a proton gradient. This is NADH-quinone oxidoreductase subunit K 2 from Citrifermentans bemidjiense (strain ATCC BAA-1014 / DSM 16622 / JCM 12645 / Bem) (Geobacter bemidjiensis).